Here is a 400-residue protein sequence, read N- to C-terminus: S-adenosylmethionine synthase (400 aa).

137–142 contributes to the ATP binding site; the sequence is GEGSGD.

The protein belongs to the AdoMet synthase 2 family. Requires Mg(2+) as cofactor.

It catalyses the reaction L-methionine + ATP + H2O = S-adenosyl-L-methionine + phosphate + diphosphate. The protein operates within amino-acid biosynthesis; S-adenosyl-L-methionine biosynthesis; S-adenosyl-L-methionine from L-methionine: step 1/1. Functionally, catalyzes the formation of S-adenosylmethionine from methionine and ATP. This is S-adenosylmethionine synthase from Haloarcula marismortui (strain ATCC 43049 / DSM 3752 / JCM 8966 / VKM B-1809) (Halobacterium marismortui).